The following is a 314-amino-acid chain: Olfactory receptor 51I1 (314 aa).

At 1–27 (MLGLNGTPFQPATLQLTGIPGIQTGLT) the chain is on the extracellular side. A helical membrane pass occupies residues 28 to 48 (WVALIFCILYMISIVGNLSIL). Topologically, residues 49-56 (TLVFWEPA) are cytoplasmic. Residues 57–77 (LHQPMYYFLSMLALNDLGVSF) form a helical membrane-spanning segment. Topologically, residues 78 to 101 (STLPTVISTFCFNYNHVAFNACLV) are extracellular. A disulfide bridge connects residues C99 and C191. A helical transmembrane segment spans residues 102–122 (QMFFIHTFSFMESGILLAMSL). Residues 123-141 (DRFVAICYPLRYVTVLTHN) lie on the Cytoplasmic side of the membrane. The chain crosses the membrane as a helical span at residues 142-162 (RILAMGLGILTKSFTTLFPFP). The Extracellular portion of the chain corresponds to 163–198 (FVVKRLPFCKGNVLHHSYCLHPDLMKVACGDIHVNN). The chain crosses the membrane as a helical span at residues 199–219 (IYGLLVIIFTYGMDSTFILLS). The Cytoplasmic segment spans residues 220–239 (YALILRAMLVIISQEQRLKA). A helical transmembrane segment spans residues 240-260 (LNTCMSHICAVLAFYVPIIAV). Topologically, residues 261–275 (SMIHRFWKSAPPVVH) are extracellular. A helical membrane pass occupies residues 276 to 296 (VMMSNVYLFVPPMLNPIIYSV). Residues 297 to 314 (KTKEIRKGILKFFHKSQA) lie on the Cytoplasmic side of the membrane.

It belongs to the G-protein coupled receptor 1 family.

Its subcellular location is the cell membrane. Odorant receptor. This Homo sapiens (Human) protein is Olfactory receptor 51I1 (OR51I1).